We begin with the raw amino-acid sequence, 491 residues long: Glutamyl-tRNA(Gln) amidotransferase subunit A (491 aa).

Residues Lys78 and Ser158 each act as charge relay system in the active site. The Acyl-ester intermediate role is filled by Ser182.

The protein belongs to the amidase family. GatA subfamily. As to quaternary structure, heterotrimer of A, B and C subunits.

The enzyme catalyses L-glutamyl-tRNA(Gln) + L-glutamine + ATP + H2O = L-glutaminyl-tRNA(Gln) + L-glutamate + ADP + phosphate + H(+). Allows the formation of correctly charged Gln-tRNA(Gln) through the transamidation of misacylated Glu-tRNA(Gln) in organisms which lack glutaminyl-tRNA synthetase. The reaction takes place in the presence of glutamine and ATP through an activated gamma-phospho-Glu-tRNA(Gln). The chain is Glutamyl-tRNA(Gln) amidotransferase subunit A from Afipia carboxidovorans (strain ATCC 49405 / DSM 1227 / KCTC 32145 / OM5) (Oligotropha carboxidovorans).